Here is a 239-residue protein sequence, read N- to C-terminus: Tetraspanin-9 (239 aa).

Residues 1–13 lie on the Cytoplasmic side of the membrane; it reads MARGCLCCVKYMM. The chain crosses the membrane as a helical span at residues 14 to 34; the sequence is FLFNLLFWLSGCGLLGVGIWL. Residues 35 to 55 are Extracellular-facing; sequence SVSQGSFATFSPSFPSLSAAN. A helical transmembrane segment spans residues 56–76; that stretch reads LVITLGSVVMVTGFLGCLGAI. At 77 to 85 the chain is on the cytoplasmic side; sequence KENKCLLLS. Residues 86-106 traverse the membrane as a helical segment; that stretch reads FFIVLLIILLAELILLILFFV. At 107–203 the chain is on the extracellular side; that stretch reads YTEKVSENAK…VEEWLNDNKH (97 aa). Residue Asn-180 is glycosylated (N-linked (GlcNAc...) asparagine). Residues 204–224 form a helical membrane-spanning segment; it reads LLGTIAMCVLVLQLLGMAFSM. Over 225-239 the chain is Cytoplasmic; the sequence is TLYQQIHRAGKKYDA.

The protein belongs to the tetraspanin (TM4SF) family.

The protein resides in the membrane. The chain is Tetraspanin-9 (tspan9) from Danio rerio (Zebrafish).